A 137-amino-acid polypeptide reads, in one-letter code: Early nodulin-55-1 (137 aa).

Residues 1–67 enclose the Phytocyanin domain; that stretch reads KYDERTESVH…GLKLMVVVMS (67 aa). N-linked (GlcNAc...) asparagine glycans are attached at residues N13, N51, and N68. Residues C20 and C55 are joined by a disulfide bond. The tract at residues 70-115 is disordered; it reads TKKKLIHSPSPSSPSPSPSPSPSPSPSPSPSLSSPSPSPLPNNQGV. Over residues 80–98 the composition is skewed to pro residues; that stretch reads PSSPSPSPSPSPSPSPSPS.

The protein belongs to the early nodulin-like (ENODL) family.

The protein resides in the symbiosome. Its subcellular location is the peribacteroid membrane. In terms of biological role, may act as a carbohydrate transporter. The chain is Early nodulin-55-1 from Glycine max (Soybean).